The sequence spans 151 residues: UPF0561 protein C2orf68 homolog (151 aa).

Residues Met1–Gly89 form a disordered region. Composition is skewed to basic and acidic residues over residues Leu32 to Glu46 and Arg70 to Pro85.

Belongs to the UPF0561 family.

In Xenopus laevis (African clawed frog), this protein is UPF0561 protein C2orf68 homolog.